The sequence spans 256 residues: Global transcriptional regulator CodY (256 aa).

Residues 1–155 (MSLLSKTREL…AATVIGMEIL (155 aa)) are GAF domain. Positions 203–222 (ASKVADRVGITRSVIVNALR) form a DNA-binding region, H-T-H motif.

This sequence belongs to the CodY family.

The protein localises to the cytoplasm. In terms of biological role, DNA-binding global transcriptional regulator which is involved in the adaptive response to starvation and acts by directly or indirectly controlling the expression of numerous genes in response to nutrient availability. During rapid exponential growth, CodY is highly active and represses genes whose products allow adaptation to nutrient depletion. The sequence is that of Global transcriptional regulator CodY from Staphylococcus epidermidis (strain ATCC 35984 / DSM 28319 / BCRC 17069 / CCUG 31568 / BM 3577 / RP62A).